A 499-amino-acid chain; its full sequence is Chitinase B (499 aa).

Residues 1–41 (MSTRKAVIGYYFIPTNQINNYTETDTSVVPFPVSNITPAKA) form the signal peptide. Residues 42–425 (KQLTHINFSF…AALDRYFNAA (384 aa)) enclose the GH18 domain. Chitin contacts are provided by residues 68–69 (DA) and 95–98 (GGWY). Residue Glu144 is the Proton donor of the active site. Chitin is bound by residues Tyr145, 212 to 215 (MTYD), and Trp403. One can recognise a Chitin-binding type-3 domain in the interval 438-498 (LRYTGVGPGN…DSAWLKVGRL (61 aa)).

Belongs to the glycosyl hydrolase 18 family. Chitinase class II subfamily.

It catalyses the reaction Random endo-hydrolysis of N-acetyl-beta-D-glucosaminide (1-&gt;4)-beta-linkages in chitin and chitodextrins.. The polypeptide is Chitinase B (chiB) (Serratia marcescens).